The sequence spans 476 residues: Probable cytosolic Fe-S cluster assembly factor GH10760 (476 aa).

[4Fe-4S] cluster is bound by residues cysteine 23, cysteine 68, cysteine 71, cysteine 74, cysteine 187, cysteine 243, cysteine 395, and cysteine 399.

It belongs to the NARF family.

In terms of biological role, component of the cytosolic iron-sulfur (Fe/S) protein assembly machinery. Required for maturation of extramitochondrial Fe/S proteins. The chain is Probable cytosolic Fe-S cluster assembly factor GH10760 from Drosophila grimshawi (Hawaiian fruit fly).